Reading from the N-terminus, the 50-residue chain is Large ribosomal subunit protein bL32c (50 aa).

This sequence belongs to the bacterial ribosomal protein bL32 family.

The protein resides in the plastid. It localises to the chloroplast. The chain is Large ribosomal subunit protein bL32c from Lotus japonicus (Lotus corniculatus var. japonicus).